Reading from the N-terminus, the 440-residue chain is Ankyrin repeat and MYND domain-containing protein 2 (440 aa).

ANK repeat units follow at residues Asn-45–Cys-74, His-79–Val-108, and Lys-159–Leu-188. Residues Cys-320, Cys-323, Cys-332, Cys-335, Cys-341, Cys-345, His-353, and Cys-357 each contribute to the Zn(2+) site. The segment at Cys-320–Cys-357 adopts an MYND-type zinc-finger fold. Over residues Ala-371–Asn-381 the composition is skewed to basic and acidic residues. A disordered region spans residues Ala-371–Glu-440.

As to quaternary structure, interacts with the retinal-specific guanylyl cyclase GC1.

Its subcellular location is the cell projection. It is found in the cilium. In terms of biological role, may be involved in the trafficking of signaling proteins to the cilia. The chain is Ankyrin repeat and MYND domain-containing protein 2 (Ankmy2) from Mus musculus (Mouse).